A 317-amino-acid polypeptide reads, in one-letter code: Epidermal growth factor-like protein (317 aa).

A signal peptide spans 1–23; the sequence is MDFKIFLFLTAIFMIVGVTVSTA. Positions 24–33 are may be required for E.coli agglutination activity; it reads TTNPTAPRAY. EGF-like domains follow at residues 93-128, 130-161, 163-195, 208-243, 245-280, and 282-315; these read HCTPDCPSGCGLGNCTAPNVCTCNKGAGFGPDGKCI, VCPGRCLNGQCYGNFCNCNSGFVLEPNGRYCT, GCTRNCGPGGQCVGNNQCSCLSGFALNSQGTCQ, ACEPLCPKGCVNGECVAPGQCRCKSGYALNSSKVCA, KCSQPCYNGFCSAPNVCTCKEGYIKDATSRNGNRCI, and YCAAGCPNGTCSAPNFCICKQGYIKQSKGSNVCV. Cystine bridges form between cysteine 98–cysteine 107, cysteine 102–cysteine 113, cysteine 115–cysteine 127, cysteine 131–cysteine 140, cysteine 135–cysteine 145, cysteine 147–cysteine 160, cysteine 164–cysteine 174, cysteine 168–cysteine 180, cysteine 182–cysteine 194, cysteine 213–cysteine 222, cysteine 217–cysteine 228, cysteine 230–cysteine 242, cysteine 246–cysteine 255, cysteine 250–cysteine 261, cysteine 263–cysteine 279, cysteine 283–cysteine 292, cysteine 287–cysteine 298, and cysteine 300–cysteine 314.

The protein localises to the secreted. Its function is as follows. Binds to lipopolysaccharides (LPS) present on the cell walls of Gram-negative bacteria, behaving as a pattern recognition receptor (PRR). Induces bacterial aggregation and enhances their subsequent clearance by the innate immune response. Binds to the inner core oligosaccharides region of rough-type bacterial LPS. Displays activity against the Gram-negative bacterium E.coli. Does not display any activity against the Gram-positive bacterium S.aureus or the fungi C.albicans. The protein is Epidermal growth factor-like protein of Holotrichia diomphalia (Korean black chafer).